A 453-amino-acid polypeptide reads, in one-letter code: Zinc finger CCCH domain-containing protein 26 (453 aa).

The segment covering 1–15 (MSETQQQVQNSTGSI) has biased composition (polar residues). The tract at residues 1–47 (MSETQQQVQNSTGSIRSPDKIEDTFRRMKVNEDNMEQSSPYPDRPGE) is disordered. S2 carries the N-acetylserine modification. Over residues 17–32 (SPDKIEDTFRRMKVNE) the composition is skewed to basic and acidic residues. 5 consecutive C3H1-type zinc fingers follow at residues 44 to 72 (RPGE…HPLT), 95 to 112 (ETGA…HPKD), 129 to 157 (RQGE…HPHP), 261 to 289 (FSER…HPKE), and 307 to 335 (RPGQ…HSML). The segment covering 360–379 (STNLRISSPPSPSDMTTLSN) has biased composition (polar residues). Residues 360–453 (STNLRISSPP…KVQDSSDKST (94 aa)) are disordered. Over residues 391-407 (ETEKQDDSPTEPEKSEV) the composition is skewed to basic and acidic residues. Residues 413–422 (PNGSDSTSLP) are compositionally biased toward polar residues. Residues 441–453 (DSSKVQDSSDKST) are compositionally biased toward basic and acidic residues.

The protein resides in the nucleus. The chain is Zinc finger CCCH domain-containing protein 26 (ZFN2) from Arabidopsis thaliana (Mouse-ear cress).